Consider the following 188-residue polypeptide: Phospholipase A2 inhibitor 31 kDa subunit (188 aa).

8 cysteine pairs are disulfide-bonded: cysteine 3/cysteine 27, cysteine 6/cysteine 13, cysteine 20/cysteine 48, cysteine 54/cysteine 75, cysteine 76/cysteine 81, cysteine 99/cysteine 124, cysteine 117/cysteine 146, and cysteine 150/cysteine 172. N-linked (GlcNAc...) asparagine glycosylation is present at asparagine 157.

Belongs to the CNF-like-inhibitor family. Heterodimer with phospholipase A2 inhibitor 25 kDa. In terms of processing, N-glycosylated. Expressed by the liver.

Its subcellular location is the secreted. Functionally, inhibits the enzymatic activity of phospholipase A2. The protein is Phospholipase A2 inhibitor 31 kDa subunit of Naja kaouthia (Monocled cobra).